We begin with the raw amino-acid sequence, 397 residues long: Mannonate dehydratase (397 aa).

This sequence belongs to the mannonate dehydratase family. Requires Fe(2+) as cofactor. Mn(2+) serves as cofactor.

The catalysed reaction is D-mannonate = 2-dehydro-3-deoxy-D-gluconate + H2O. Its pathway is carbohydrate metabolism; pentose and glucuronate interconversion. Catalyzes the dehydration of D-mannonate. This is Mannonate dehydratase from Saccharophagus degradans (strain 2-40 / ATCC 43961 / DSM 17024).